A 484-amino-acid chain; its full sequence is MAKAATPKKTAAVNGAGKVTQVIGAVVDVAFEGELPPILNALETQNNGNRLVLEVAQHLGENVVRTIAMDSTEGLVRGQSVADTGAPIEVPVGLETLGRIMNVIGEPVDEAGPIVTAKKRAIHQDAPSYVEQSTEGQILVTGIKVVDLLAPYAKGGKIGLFGGAGVGKTVLIMELINNVAKAHGGYSVFAGVGERTREGNDLYHEMIESNVNKLGGGEGSKAALVYGQMNEPPGARARVALTGLTIAENFRDEGQDVLFFVDNIFRFTQAGSEVSALLGRIPSAVGYQPTLATDMGQMQERITTTNKGSITSVQAIYVPADDLTDPAPATSFAHLDATTVLSRSIAEKGIYPAVDPLDSTSRMLDPMIVGEEHYEVARKVQSTLQRYKSLQDIIAILGMDELSEEDKLTVARARKIERFLSQPFFVAEVFTGSPGKLVALEDTIKGFKGLVNGEYDSLPEAAFYMVGSMEEAIEKAKKLTAEAA.

162–169 (GGAGVGKT) contacts ATP.

The protein belongs to the ATPase alpha/beta chains family. In terms of assembly, F-type ATPases have 2 components, CF(1) - the catalytic core - and CF(0) - the membrane proton channel. CF(1) has five subunits: alpha(3), beta(3), gamma(1), delta(1), epsilon(1). CF(0) has three main subunits: a(1), b(2) and c(9-12). The alpha and beta chains form an alternating ring which encloses part of the gamma chain. CF(1) is attached to CF(0) by a central stalk formed by the gamma and epsilon chains, while a peripheral stalk is formed by the delta and b chains.

The protein resides in the cell inner membrane. The catalysed reaction is ATP + H2O + 4 H(+)(in) = ADP + phosphate + 5 H(+)(out). Functionally, produces ATP from ADP in the presence of a proton gradient across the membrane. The catalytic sites are hosted primarily by the beta subunits. The sequence is that of ATP synthase subunit beta from Agrobacterium fabrum (strain C58 / ATCC 33970) (Agrobacterium tumefaciens (strain C58)).